The chain runs to 218 residues: Octanoyltransferase (218 aa).

Residues A45 to S218 enclose the BPL/LPL catalytic domain. Residues R84–H91, A151–G153, and G164–A166 each bind substrate. The active-site Acyl-thioester intermediate is the C182.

Belongs to the LipB family.

It is found in the cytoplasm. It catalyses the reaction octanoyl-[ACP] + L-lysyl-[protein] = N(6)-octanoyl-L-lysyl-[protein] + holo-[ACP] + H(+). It participates in protein modification; protein lipoylation via endogenous pathway; protein N(6)-(lipoyl)lysine from octanoyl-[acyl-carrier-protein]: step 1/2. In terms of biological role, catalyzes the transfer of endogenously produced octanoic acid from octanoyl-acyl-carrier-protein onto the lipoyl domains of lipoate-dependent enzymes. Lipoyl-ACP can also act as a substrate although octanoyl-ACP is likely to be the physiological substrate. This is Octanoyltransferase from Thiobacillus denitrificans (strain ATCC 25259 / T1).